Reading from the N-terminus, the 206-residue chain is 3-isopropylmalate dehydratase small subunit (206 aa).

It belongs to the LeuD family. LeuD type 1 subfamily. Heterodimer of LeuC and LeuD.

It catalyses the reaction (2R,3S)-3-isopropylmalate = (2S)-2-isopropylmalate. It functions in the pathway amino-acid biosynthesis; L-leucine biosynthesis; L-leucine from 3-methyl-2-oxobutanoate: step 2/4. Its function is as follows. Catalyzes the isomerization between 2-isopropylmalate and 3-isopropylmalate, via the formation of 2-isopropylmaleate. The polypeptide is 3-isopropylmalate dehydratase small subunit (Leptospira borgpetersenii serovar Hardjo-bovis (strain L550)).